The following is an 884-amino-acid chain: Exocyst complex component 2 (884 aa).

The segment covering 1-11 (MEENAQARERL) has biased composition (basic and acidic residues). The tract at residues 1–27 (MEENAQARERLPPTVTGLSPTEGVPGT) is disordered. One can recognise an IPT/TIG domain in the interval 13-98 (PTVTGLSPTE…GSSNVKFRVF (86 aa)). Coiled coils occupy residues 178-206 (ADATIEDLRIAIKNMELSKQNEAKRSEEM) and 846-874 (NQRLQQCLKNMRTTMRMALQSLEQHAENL).

This sequence belongs to the SEC5 family. The exocyst complex is composed of sec-3/exoc1, sec-5/exoc2, sec-6/exoc3, sec-8/exoc4, sec-10/exoc5, sec-15/exoc6, exo-70/exoc7 and exo-84/exoc8.

Its function is as follows. Component of the exocyst complex involved in the docking of exocytic vesicles with fusion sites on the plasma membrane. The sequence is that of Exocyst complex component 2 (sec-5) from Caenorhabditis elegans.